We begin with the raw amino-acid sequence, 462 residues long: Syringate O-demethylase (462 aa).

Belongs to the GcvT family.

It carries out the reaction syringate + (6S)-5,6,7,8-tetrahydrofolate = 3-O-methylgallate + (6S)-5-methyl-5,6,7,8-tetrahydrofolate. Its pathway is secondary metabolite metabolism; lignin degradation. Functionally, involved in the catabolism of syringate. Catalyzes the conversion of syringate to 3-O-methylgallate (3MGA) in the presence of tetrahydrofolate. Has weak activity with vanillate and 3-O-methylgallate. In Sphingobium sp. (strain NBRC 103272 / SYK-6), this protein is Syringate O-demethylase.